The following is a 671-amino-acid chain: UvrABC system protein B (671 aa).

The Helicase ATP-binding domain maps to 31 to 189 (KGFEEGKKEQ…QLVDIQFDRN (159 aa)). 44 to 51 (GATGTGKT) lines the ATP pocket. Residues 97–120 (YYDYYQPEAYVPSTDTYIEKDSAI) carry the Beta-hairpin motif. The region spanning 437 to 599 (QIDDLVGEIN…ITPKTIIKPI (163 aa)) is the Helicase C-terminal domain. The UVR domain maps to 634 to 669 (KELVANLRSQMQAAAKKLDFEQAASLRDTILELQAD).

The protein belongs to the UvrB family. In terms of assembly, forms a heterotetramer with UvrA during the search for lesions. Interacts with UvrC in an incision complex.

The protein localises to the cytoplasm. Functionally, the UvrABC repair system catalyzes the recognition and processing of DNA lesions. A damage recognition complex composed of 2 UvrA and 2 UvrB subunits scans DNA for abnormalities. Upon binding of the UvrA(2)B(2) complex to a putative damaged site, the DNA wraps around one UvrB monomer. DNA wrap is dependent on ATP binding by UvrB and probably causes local melting of the DNA helix, facilitating insertion of UvrB beta-hairpin between the DNA strands. Then UvrB probes one DNA strand for the presence of a lesion. If a lesion is found the UvrA subunits dissociate and the UvrB-DNA preincision complex is formed. This complex is subsequently bound by UvrC and the second UvrB is released. If no lesion is found, the DNA wraps around the other UvrB subunit that will check the other stand for damage. The protein is UvrABC system protein B of Lacticaseibacillus casei (strain BL23) (Lactobacillus casei).